Reading from the N-terminus, the 471-residue chain is Eremophilane O-acetyltransferase ORF8 (471 aa).

This sequence belongs to the fumigaclavine B O-acetyltransferase family. As to quaternary structure, monomer.

The protein operates within sesquiterpene biosynthesis. Functionally, O-acetyltransferase; part of the gene cluster that mediates the biosynthesis of PR-toxin, a bicyclic sesquiterpene belonging to the eremophilane class and acting as a mycotoxin. The first step of the pathway is catalyzed by the aristolochene synthase which performs the cyclization of trans,trans-farnesyl diphosphate (FPP) to the bicyclic sesquiterpene aristolochene. Following the formation of aristolochene, the non-oxygenated aristolochene is converted to the trioxygenated intermediate eremofortin B, via 7-epi-neopetasone. This conversion appears to involve three enzymes, a hydroxysterol oxidase-like enzyme, the quinone-oxidase prx3 that forms the quinone-type-structure in the bicyclic nucleus of aristolochene with the C8-oxo group and the C-3 hydroxyl group, and the P450 monooxygenase ORF6 that introduces the epoxide at the double bond between carbons 1 and 2. No monoxy or dioxy-intermediates have been reported to be released to the broth, so these three early oxidative reactions may be coupled together. Eremofortin B is further oxidized by another P450 monooxygenase, that introduces a second epoxide between carbons 7 and 11 prior to acetylation to eremofortin A by the acetyltransferase ORF8. The second epoxidation may be performed by a second P450 monooxygenase. After the acetylation step, eremofortin A is converted to eremofortin C and then to PR-toxin. First the conversion of eremofortin A to eremofortin C proceeds by oxidation of the side chain of the molecule at C-12 and is catalyzed by the short-chain oxidoreductase prx1. The cytochrome P450 monooxygenase ORF6 is probably also involved in this step. The primary alcohol formed at C-12 is finally oxidized by the short-chain alcohol dehydrogenase prx4 that forms PR-toxin. This Penicillium roqueforti (strain FM164) protein is Eremophilane O-acetyltransferase ORF8.